The following is a 242-amino-acid chain: Phosphoribosylaminoimidazole-succinocarboxamide synthase (242 aa).

This sequence belongs to the SAICAR synthetase family.

It catalyses the reaction 5-amino-1-(5-phospho-D-ribosyl)imidazole-4-carboxylate + L-aspartate + ATP = (2S)-2-[5-amino-1-(5-phospho-beta-D-ribosyl)imidazole-4-carboxamido]succinate + ADP + phosphate + 2 H(+). The protein operates within purine metabolism; IMP biosynthesis via de novo pathway; 5-amino-1-(5-phospho-D-ribosyl)imidazole-4-carboxamide from 5-amino-1-(5-phospho-D-ribosyl)imidazole-4-carboxylate: step 1/2. This is Phosphoribosylaminoimidazole-succinocarboxamide synthase from Trichodesmium erythraeum (strain IMS101).